The primary structure comprises 305 residues: Putative lipid kinase USA300HOU_0749 (305 aa).

The region spanning 3-139 (NKYTHGVLFY…YDVIKINNQY (137 aa)) is the DAGKc domain. Residues Ser-44, 74–80 (GDGTVNE), and Thr-101 contribute to the ATP site. Ser-220, Asp-223, and Glu-225 together coordinate Mg(2+). The active-site Proton acceptor is Glu-281.

It belongs to the diacylglycerol/lipid kinase family. The cofactor is Mg(2+).

Functionally, may catalyze the ATP-dependent phosphorylation of lipids other than diacylglycerol (DAG). In Staphylococcus aureus (strain USA300 / TCH1516), this protein is Putative lipid kinase USA300HOU_0749.